The chain runs to 587 residues: Ankyrin repeat and SOCS box protein 14 (587 aa).

ANK repeat units lie at residues 82–112, 117–146, 150–179, 183–212, 216–245, 248–277, 281–310, 313–342, 355–384, 385–414, and 416–449; these read IGWI…SLWE, NGET…NPNA, EGNS…DVNL, NERT…HPDP, YGFT…IFCL, DSSS…DANI, SGHL…LAAI, SGIS…DVNF, HRKS…LPNQ, DPVN…NVNY, and CRVN…DTER. In terms of domain architecture, SOCS box spans 521-576; sequence WSEIHFILTNPRSLKHLCRLKIRKCMGRLHLRCPVFMSFLPLPNRLKAYVLYKEYD.

It belongs to the ankyrin SOCS box (ASB) family. In terms of assembly, interacts with MAPRE2; this interaction promotes MAPRE2 degradation.

It participates in protein modification; protein ubiquitination. May be a substrate-recognition component of a SCF-like ECS (Elongin-Cullin-SOCS-box protein) E3 ubiquitin-protein ligase complex which mediates the ubiquitination and subsequent proteasomal degradation of target proteins. Plays a role in the inhibition of cardiomyocyte nuclear proliferation by mediating the ubiquitination and degradation of MAPRE2. In Homo sapiens (Human), this protein is Ankyrin repeat and SOCS box protein 14 (ASB14).